The sequence spans 391 residues: GTPase Obg (391 aa).

Residues Met1–Leu159 form the Obg domain. Residues Ala160–Glu333 enclose the OBG-type G domain. Residues Gly166–Ser173, Phe191–Ile195, Asp213–Gly216, Asn283–Asp286, and Ser314–Ala316 contribute to the GTP site. 2 residues coordinate Mg(2+): Ser173 and Thr193. Over residues Leu367–Asn377 the composition is skewed to basic and acidic residues. The interval Leu367 to Pro391 is disordered. Residues Asp378 to Pro391 are compositionally biased toward acidic residues.

Belongs to the TRAFAC class OBG-HflX-like GTPase superfamily. OBG GTPase family. As to quaternary structure, monomer. The cofactor is Mg(2+).

The protein resides in the cytoplasm. Functionally, an essential GTPase which binds GTP, GDP and possibly (p)ppGpp with moderate affinity, with high nucleotide exchange rates and a fairly low GTP hydrolysis rate. Plays a role in control of the cell cycle, stress response, ribosome biogenesis and in those bacteria that undergo differentiation, in morphogenesis control. This is GTPase Obg from Alcanivorax borkumensis (strain ATCC 700651 / DSM 11573 / NCIMB 13689 / SK2).